The following is a 329-amino-acid chain: Protein-arginine N-acetylglucosaminyltransferase NleB1 (329 aa).

An N-beta-linked (GlcNAc) arginine; by autocatalysis glycan is attached at Arg13. 48 to 50 (QWF) provides a ligand contact to UDP-N-acetyl-alpha-D-glucosamine. N-beta-linked (GlcNAc) arginine; by autocatalysis glycosylation is present at Arg53. Tyr72 is a UDP-N-acetyl-alpha-D-glucosamine binding site. Residue Arg159 is glycosylated (N-beta-linked (GlcNAc) arginine; by autocatalysis). Residue 219-222 (YLDA) participates in UDP-N-acetyl-alpha-D-glucosamine binding. The DXD motif motif lies at 221–223 (DAD). Position 223 (Asp223) interacts with Mn(2+). Glu253 serves as the catalytic Proton acceptor. Arg293 is a glycosylation site (N-beta-linked (GlcNAc) arginine; by autocatalysis). Positions 320 and 322 each coordinate Mn(2+). Residues Ser322 and 327-329 (SSW) each bind UDP-N-acetyl-alpha-D-glucosamine.

The protein belongs to the glycosyltransferase NleB family. Mn(2+) is required as a cofactor. Auto-glycosylated: arginine GlcNAcylation is required for activity toward death domain-containing host target proteins.

Its subcellular location is the secreted. The protein localises to the host cytoplasm. The enzyme catalyses L-arginyl-[protein] + UDP-N-acetyl-alpha-D-glucosamine = N(omega)-(N-acetyl-beta-D-glucosaminyl)-L-arginyl-[protein] + UDP + H(+). Protein-arginine N-acetylglucosaminyltransferase activity is inhibited by 100066N compound (flavone analog) and 102644N compound (a substituted isoxazole). Its function is as follows. Protein-arginine N-acetylglucosaminyltransferase effector that disrupts TNF signaling in infected cells, including NF-kappa-B signaling, apoptosis and necroptosis. Acts by catalyzing the transfer of a single N-acetylglucosamine (GlcNAc) to a conserved arginine residue in the death domain of host proteins such as FADD: arginine GlcNAcylation prevents homotypic/heterotypic death domain interactions and assembly of the oligomeric TNF-alpha receptor complex, thereby disrupting TNF signaling. Also acts on host proteins without a death domain: catalyzes arginine GlcNAcylation of host GAPDH protein, thereby preventing GAPDH interaction with TRAF2, leading to inhibit NF-kappa-B signaling. Catalyzes auto-GlcNAcylation, which is required for activity toward death domain-containing host target proteins. In Escherichia coli O157:H7, this protein is Protein-arginine N-acetylglucosaminyltransferase NleB1.